The sequence spans 419 residues: MSTNSSNPNEVMEKVQDLKIDDSKPKVDSEEQPEAESDGESATDGAQKKKKKKKSKKKKKITAIDNSYPDGVFPEGEWQEYPLDVNSYRTTSEEKRYLDRQQNNHWQDFRKGAEIHRRVRHKAQSSIRPGMNMTEIADLIENSVRSYANNDHTLKAGIGFPTGLSLNHVAAHYTPNAGDKTVLNYEDVMKVDIGVHVNGHIVDSAFTLTFDDKYDSLLKAVKEATNTGVKEAGIDVRLNDIGEAIQEVMESYEMELNGKTYPIKCIRNLNGHNIGDYLIHSGKTVPIVPNGDMTKMEEGETFAIETFGSTGNGYVLPQGECSHYAKNPGTDDIVVPGDKAKSLLNVINENFGTLPWCRRYLDRLGQDKYLLALNQLVRAGIVQDYPPIVDIKGSYTAQFEHTILLHPHKKEVVSRGDDY.

Residues 1–69 (MSTNSSNPNE…KITAIDNSYP (69 aa)) are disordered. The span at 11 to 29 (VMEKVQDLKIDDSKPKVDS) shows a compositional bias: basic and acidic residues. Over residues 30-41 (EEQPEAESDGES) the composition is skewed to acidic residues. Residues 48-61 (KKKKKKKSKKKKKI) are compositionally biased toward basic residues. Residue His-172 participates in substrate binding. A divalent metal cation is bound by residues Asp-192, Asp-203, and His-272. His-280 lines the substrate pocket. 2 residues coordinate a divalent metal cation: Glu-305 and Glu-400.

It belongs to the peptidase M24A family. Methionine aminopeptidase eukaryotic type 2 subfamily. Co(2+) is required as a cofactor. The cofactor is Zn(2+). Requires Mn(2+) as cofactor. Fe(2+) serves as cofactor.

The protein resides in the cytoplasm. It carries out the reaction Release of N-terminal amino acids, preferentially methionine, from peptides and arylamides.. Its function is as follows. Cotranslationally removes the N-terminal methionine from nascent proteins. The N-terminal methionine is often cleaved when the second residue in the primary sequence is small and uncharged (Met-Ala-, Cys, Gly, Pro, Ser, Thr, or Val). The chain is Methionine aminopeptidase 2 from Debaryomyces hansenii (strain ATCC 36239 / CBS 767 / BCRC 21394 / JCM 1990 / NBRC 0083 / IGC 2968) (Yeast).